The chain runs to 332 residues: Arrestin domain-containing protein 5 (332 aa).

A disordered region spans residues 311-332; sequence SNQTAAGCRTRAPLPVSPDQQN.

It belongs to the arrestin family.

The protein localises to the membrane. Functionally, plays an essential role in spermatogenesis. May be involved in the anchoring of the sperm head to the tail during spermatogenesis by affecting SEC22A-mediated SUN5 and NDC1 transport and localization. The protein is Arrestin domain-containing protein 5 (ARRDC5) of Bos taurus (Bovine).